The chain runs to 416 residues: Glutamyl-tRNA reductase (416 aa).

Substrate contacts are provided by residues 49–52, serine 105, 110–112, and glutamine 116; these read TCNR and EPQ. The active-site Nucleophile is cysteine 50. An NADP(+)-binding site is contributed by 185-190; that stretch reads GAGEMI.

Belongs to the glutamyl-tRNA reductase family. As to quaternary structure, homodimer.

It catalyses the reaction (S)-4-amino-5-oxopentanoate + tRNA(Glu) + NADP(+) = L-glutamyl-tRNA(Glu) + NADPH + H(+). It functions in the pathway porphyrin-containing compound metabolism; protoporphyrin-IX biosynthesis; 5-aminolevulinate from L-glutamyl-tRNA(Glu): step 1/2. Catalyzes the NADPH-dependent reduction of glutamyl-tRNA(Glu) to glutamate 1-semialdehyde (GSA). The polypeptide is Glutamyl-tRNA reductase (Nitrosomonas europaea (strain ATCC 19718 / CIP 103999 / KCTC 2705 / NBRC 14298)).